Consider the following 122-residue polypeptide: Double-headed protease inhibitor, submandibular gland (122 aa).

Kazal-like domains are found at residues 10–70 (GGRK…NCDI) and 71–121 (ECTQ…QCES). 6 cysteine pairs are disulfide-bonded: C16/C50, C28/C47, C36/C68, C72/C101, C79/C98, and C87/C119.

The protein localises to the secreted. Its function is as follows. This inhibitor is composed of two homologous actively inhibiting halves: one which inhibits trypsin, the other which inhibits elastase. The polypeptide is Double-headed protease inhibitor, submandibular gland (Meles meles (Eurasian badger)).